A 258-amino-acid chain; its full sequence is Spindlin-2B (258 aa).

A compositionally biased stretch (low complexity) spans 1–23; that stretch reads MKTPNAQEAEGQQTRAAAGRATG. The tract at residues 1 to 49 is disordered; sequence MKTPNAQEAEGQQTRAAAGRATGSANMTKKKVSQKKQRGRPSSQPRRNI. The segment covering 28 to 39 has biased composition (basic residues); it reads TKKKVSQKKQRG. Tudor-like domain regions lie at residues 50–99, 129–178, and 210–255; these read VGCR…LELH, IGKA…YQLL, and IGKH…YDLV. Histone H3K4me3 and H3R8me2a binding regions lie at residues Glu138 and 246-248; that span reads DFH.

Belongs to the SPIN/STSY family. As to quaternary structure, interacts with C11orf84/SPINDOC. As to expression, detected in all the examined tissues with highest expression in liver, followed by heart, stomach, kidney, skeletal muscle, placenta, and pancreas.

The protein localises to the nucleus. In terms of biological role, involved in the regulation of cell cycle progression, this activity is related to the inhibition of apoptosis following the removal of essential growth factors. Exhibits H3K4me3-binding activity. The chain is Spindlin-2B (SPIN2B) from Homo sapiens (Human).